An 89-amino-acid chain; its full sequence is Small ribosomal subunit protein bS20 (89 aa).

The disordered stretch occupies residues 1 to 28; the sequence is MTLANIKSAKKRAVQSEKRRQHNASQRS.

This sequence belongs to the bacterial ribosomal protein bS20 family.

Functionally, binds directly to 16S ribosomal RNA. This chain is Small ribosomal subunit protein bS20, found in Haemophilus ducreyi (strain 35000HP / ATCC 700724).